A 60-amino-acid chain; its full sequence is Large ribosomal subunit protein bL32 (60 aa).

Basic residues predominate over residues 1 to 23 (MAKHPVPKKKTSKSKRDMRRSHH). Residues 1–26 (MAKHPVPKKKTSKSKRDMRRSHHALV) are disordered.

The protein belongs to the bacterial ribosomal protein bL32 family.

The protein is Large ribosomal subunit protein bL32 of Deinococcus geothermalis (strain DSM 11300 / CIP 105573 / AG-3a).